Reading from the N-terminus, the 77-residue chain is MLSKEKINRINELSAKAKNGQLTDEEAKERTALRKEYLDTFRATMRDTIENVKVVDAEGNDVTPEKVRQAKKNKFLN.

It belongs to the UPF0291 family.

The protein localises to the cytoplasm. This is UPF0291 protein Bsph_1689 from Lysinibacillus sphaericus (strain C3-41).